Consider the following 430-residue polypeptide: Enolase (430 aa).

Residue Q163 participates in (2R)-2-phosphoglycerate binding. E205 (proton donor) is an active-site residue. Mg(2+) is bound by residues D242, E287, and D314. (2R)-2-phosphoglycerate-binding residues include K339, R368, S369, and K390. The active-site Proton acceptor is the K339.

It belongs to the enolase family. Requires Mg(2+) as cofactor.

It localises to the cytoplasm. The protein resides in the secreted. It is found in the cell surface. The catalysed reaction is (2R)-2-phosphoglycerate = phosphoenolpyruvate + H2O. The protein operates within carbohydrate degradation; glycolysis; pyruvate from D-glyceraldehyde 3-phosphate: step 4/5. Catalyzes the reversible conversion of 2-phosphoglycerate (2-PG) into phosphoenolpyruvate (PEP). It is essential for the degradation of carbohydrates via glycolysis. The sequence is that of Enolase from Bacillus cytotoxicus (strain DSM 22905 / CIP 110041 / 391-98 / NVH 391-98).